Here is a 267-residue protein sequence, read N- to C-terminus: tRNA-cytidine(32) 2-sulfurtransferase 2 (267 aa).

A PP-loop motif motif is present at residues 42 to 47 (SGGKDS). 3 residues coordinate [4Fe-4S] cluster: Cys117, Cys120, and Cys208.

It belongs to the TtcA family. As to quaternary structure, homodimer. Mg(2+) serves as cofactor. [4Fe-4S] cluster is required as a cofactor.

The protein localises to the cytoplasm. It carries out the reaction cytidine(32) in tRNA + S-sulfanyl-L-cysteinyl-[cysteine desulfurase] + AH2 + ATP = 2-thiocytidine(32) in tRNA + L-cysteinyl-[cysteine desulfurase] + A + AMP + diphosphate + H(+). It functions in the pathway tRNA modification. In terms of biological role, catalyzes the ATP-dependent 2-thiolation of cytidine in position 32 of tRNA, to form 2-thiocytidine (s(2)C32). The sulfur atoms are provided by the cysteine/cysteine desulfurase (IscS) system. The chain is tRNA-cytidine(32) 2-sulfurtransferase 2 from Francisella tularensis subsp. holarctica (strain FTNF002-00 / FTA).